We begin with the raw amino-acid sequence, 755 residues long: Kojibiose phosphorylase (755 aa).

A substrate-binding site is contributed by 333–334 (WD). Glu-473 acts as the Proton donor in catalysis. Residue 573–574 (KQ) coordinates substrate.

It belongs to the glycosyl hydrolase 65 family.

It carries out the reaction kojibiose + phosphate = beta-D-glucose 1-phosphate + D-glucose. In vitro catalyzes the phosphorolysis of D-kojibiose into beta-D-glucose 1-phosphate and D-glucose. No other disaccharides tested substitute for D-kojibiose. In the reverse direction disaccharides can be formed from beta-D-glucose 1-phosphate plus D-glucose, L-sorbose, D-sorbitol, L-iditol or 1,5-anhydro-D-glucitol, but with low efficiency. The beta-D-glucose 1-phosphate product is the substrate for YcjU (AC P77366), the next apparent enzyme in the putative biochemical pathway encoded in this locus (yjcM to ycjW). This is Kojibiose phosphorylase (ycjT) from Escherichia coli (strain K12).